Reading from the N-terminus, the 222-residue chain is MEISINKEKALVVFSGGQDSTTCLFWAKKRYKEVVAVSFDYNQKHKLELECAKDICKKHGVEHHILDMKLLNQLAPNSLTRADMKVDEDAPKDGPPNTFVDGRNLLFLSFAAVFAKQRGINNIITGVSQSDFSGYPDCRDVFIKSLNVTLNLAMDYQFVLITPLMWIDKAETWKLADDLGVLDIVKNETLTCYNGIKGNGCGECPACKLRKNGYVEFKRLYK.

ATP is bound at residue 14-24 (FSGGQDSTTCL). Zn(2+) contacts are provided by cysteine 192, cysteine 201, cysteine 204, and cysteine 207.

It belongs to the QueC family. As to quaternary structure, homodimer. It depends on Zn(2+) as a cofactor.

It catalyses the reaction 7-carboxy-7-deazaguanine + NH4(+) + ATP = 7-cyano-7-deazaguanine + ADP + phosphate + H2O + H(+). Its pathway is purine metabolism; 7-cyano-7-deazaguanine biosynthesis. Catalyzes the ATP-dependent conversion of 7-carboxy-7-deazaguanine (CDG) to 7-cyano-7-deazaguanine (preQ(0)). In Clostridium acetobutylicum (strain ATCC 824 / DSM 792 / JCM 1419 / IAM 19013 / LMG 5710 / NBRC 13948 / NRRL B-527 / VKM B-1787 / 2291 / W), this protein is 7-cyano-7-deazaguanine synthase.